Consider the following 359-residue polypeptide: Peptide chain release factor 1 (359 aa).

Gln235 carries the N5-methylglutamine modification.

It belongs to the prokaryotic/mitochondrial release factor family. In terms of processing, methylated by PrmC. Methylation increases the termination efficiency of RF1.

It localises to the cytoplasm. Peptide chain release factor 1 directs the termination of translation in response to the peptide chain termination codons UAG and UAA. This is Peptide chain release factor 1 from Ehrlichia ruminantium (strain Gardel).